The primary structure comprises 312 residues: MKVAVLGAAGGIGQALALLLKTQLPSGSELSLYDIAPVTPGVAVDLSHIPTAVKIKGFSGEDATPALEGADVVLISAGVARKPGMDRSDLFNVNAGIVKNLVQQVAKTCPKACIGIITNPVNTTVAIAAEVLKKAGVYDKNKLFGVTTLDIIRSNTFVAELKGKQPGEVEVPVIGGHSGVTILPLLSQVLGVSFTEQEVADLTKRIQNAGTEVVEAKAGGGSATLSMGQAAARFGLSLVRALQGEQGVVECAYVEGDGQYARFFSQPLLLGKSGVEERKSIGTLSAFEQNALEGMLDTLKKDIALGEEFVNK.

NAD(+) is bound by residues 7–13 (GAAGGIG) and aspartate 34. Arginine 81 and arginine 87 together coordinate substrate. NAD(+) contacts are provided by residues asparagine 94 and 117–119 (ITN). Asparagine 119 and arginine 153 together coordinate substrate. Catalysis depends on histidine 177, which acts as the Proton acceptor. Methionine 227 contributes to the NAD(+) binding site.

Belongs to the LDH/MDH superfamily. MDH type 1 family. Homodimer.

The enzyme catalyses (S)-malate + NAD(+) = oxaloacetate + NADH + H(+). Functionally, catalyzes the reversible oxidation of malate to oxaloacetate. This Shigella dysenteriae serotype 1 (strain Sd197) protein is Malate dehydrogenase.